Here is a 306-residue protein sequence, read N- to C-terminus: Homoserine O-succinyltransferase (306 aa).

Cys142 serves as the catalytic Acyl-thioester intermediate. The substrate site is built by Lys163 and Ser192. The Proton acceptor role is filled by His233. Residue Glu235 is part of the active site. Arg247 lines the substrate pocket.

It belongs to the MetA family.

It is found in the cytoplasm. It catalyses the reaction L-homoserine + succinyl-CoA = O-succinyl-L-homoserine + CoA. The protein operates within amino-acid biosynthesis; L-methionine biosynthesis via de novo pathway; O-succinyl-L-homoserine from L-homoserine: step 1/1. Functionally, transfers a succinyl group from succinyl-CoA to L-homoserine, forming succinyl-L-homoserine. In Pelagibacterium halotolerans (strain DSM 22347 / JCM 15775 / CGMCC 1.7692 / B2), this protein is Homoserine O-succinyltransferase.